We begin with the raw amino-acid sequence, 454 residues long: DNA-binding protein BIN4 (454 aa).

3 disordered regions span residues 24–53 (LLSLSSSDDDSPYRESEVISSLPLPDDDGD), 103–249 (AGKE…DKDT), and 380–454 (TFES…KAKK). Residues 112–123 (DCEKLSSKHKDA) show a composition bias toward basic and acidic residues. Residues 132-150 (LVSSDSEPSSPIKQEVTVS) show a composition bias toward polar residues. Basic and acidic residues predominate over residues 229 to 249 (TPKEENCAQEILKTEDKDKDT). Residues 438–454 (PAKKARNSAPKKPKAKK) show a composition bias toward basic residues.

In terms of assembly, interacts with TOP6A, RHL1 and itself, but not with TOP6B. In terms of tissue distribution, expressed in expanding cotyledons, vascular cells, elongating root cells, developing leaf trichomes, root and apical meristems and lateral root primordia.

It is found in the nucleus. In terms of biological role, component of the DNA topoisomerase VI complex. Binds to DNA. Required for chromatin organization and progression of endoreduplication cycles. The loss of BIN4 activates the ATM- and ATR-dependent DNA damage responses in postmitotic cells and induces the ectopic expression of the mitotic G2/M-specific cyclin B1;1 gene in non-dividing cells. In Arabidopsis thaliana (Mouse-ear cress), this protein is DNA-binding protein BIN4 (BIN4).